Consider the following 90-residue polypeptide: Probable Fe(2+)-trafficking protein (90 aa).

Belongs to the Fe(2+)-trafficking protein family.

Its function is as follows. Could be a mediator in iron transactions between iron acquisition and iron-requiring processes, such as synthesis and/or repair of Fe-S clusters in biosynthetic enzymes. The polypeptide is Probable Fe(2+)-trafficking protein (Hydrogenovibrio crunogenus (strain DSM 25203 / XCL-2) (Thiomicrospira crunogena)).